The sequence spans 157 residues: uncharacterized protein (157 aa).

Residues 9-146 enclose the N-acetyltransferase domain; that stretch reads LLINYKTLDE…GDFYVWHPET (138 aa).

This is an uncharacterized protein from Bacillus cereus (strain ATCC 10987 / NRS 248).